A 196-amino-acid polypeptide reads, in one-letter code: Large ribosomal subunit protein bL9 (196 aa).

This sequence belongs to the bacterial ribosomal protein bL9 family.

In terms of biological role, binds to the 23S rRNA. The protein is Large ribosomal subunit protein bL9 of Rhodopseudomonas palustris (strain HaA2).